The following is a 78-amino-acid chain: Cytochrome c-551 (78 aa).

Residues Cys14, Cys17, His18, and Met55 each contribute to the heme c site.

Binds 1 heme c group covalently per subunit.

The sequence is that of Cytochrome c-551 from Halorhodospira halophila (Ectothiorhodospira halophila).